The primary structure comprises 704 residues: Elongation factor G (704 aa).

The tr-type G domain maps to 8–290 (ARYRNIGISA…AVIDYLPSPV (283 aa)). GTP contacts are provided by residues 17-24 (AHIDAGKT), 88-92 (DTPGH), and 142-145 (NKMD).

Belongs to the TRAFAC class translation factor GTPase superfamily. Classic translation factor GTPase family. EF-G/EF-2 subfamily.

It is found in the cytoplasm. Functionally, catalyzes the GTP-dependent ribosomal translocation step during translation elongation. During this step, the ribosome changes from the pre-translocational (PRE) to the post-translocational (POST) state as the newly formed A-site-bound peptidyl-tRNA and P-site-bound deacylated tRNA move to the P and E sites, respectively. Catalyzes the coordinated movement of the two tRNA molecules, the mRNA and conformational changes in the ribosome. This chain is Elongation factor G, found in Salmonella agona (strain SL483).